The sequence spans 380 residues: Cytochrome b (380 aa).

4 helical membrane-spanning segments follow: residues 34 to 54 (FGSL…LLAM), 78 to 99 (WLIR…FLHI), 114 to 134 (WNTG…GYVL), and 179 to 199 (FFAL…THLM). H84 and H98 together coordinate heme b. Residues H183 and H197 each contribute to the heme b site. A ubiquinone is bound at residue H202. 4 helical membrane passes run 227–247 (LKDI…ALFS), 289–309 (LGGV…PFLH), 321–341 (LSQA…WVGS), and 348–368 (FIII…SLLP).

The protein belongs to the cytochrome b family. In terms of assembly, the cytochrome bc1 complex contains 11 subunits: 3 respiratory subunits (MT-CYB, CYC1 and UQCRFS1), 2 core proteins (UQCRC1 and UQCRC2) and 6 low-molecular weight proteins (UQCRH/QCR6, UQCRB/QCR7, UQCRQ/QCR8, UQCR10/QCR9, UQCR11/QCR10 and a cleavage product of UQCRFS1). This cytochrome bc1 complex then forms a dimer. Requires heme b as cofactor.

The protein localises to the mitochondrion inner membrane. Component of the ubiquinol-cytochrome c reductase complex (complex III or cytochrome b-c1 complex) that is part of the mitochondrial respiratory chain. The b-c1 complex mediates electron transfer from ubiquinol to cytochrome c. Contributes to the generation of a proton gradient across the mitochondrial membrane that is then used for ATP synthesis. This is Cytochrome b (MT-CYB) from Crossoptilon crossoptilon (White-eared pheasant).